A 201-amino-acid polypeptide reads, in one-letter code: Large ribosomal subunit protein uL4 (201 aa).

Residues 44-73 (RAQKSRAEVKASRKKPWRQKGTGRARAGSV) form a disordered region. Basic residues predominate over residues 55–66 (SRKKPWRQKGTG).

The protein belongs to the universal ribosomal protein uL4 family. As to quaternary structure, part of the 50S ribosomal subunit.

One of the primary rRNA binding proteins, this protein initially binds near the 5'-end of the 23S rRNA. It is important during the early stages of 50S assembly. It makes multiple contacts with different domains of the 23S rRNA in the assembled 50S subunit and ribosome. In terms of biological role, forms part of the polypeptide exit tunnel. The polypeptide is Large ribosomal subunit protein uL4 (Hamiltonella defensa subsp. Acyrthosiphon pisum (strain 5AT)).